We begin with the raw amino-acid sequence, 218 residues long: Twisted gastrulation protein homolog 1-B (218 aa).

A signal peptide spans 1–25 (MKPSFLHIPAAALLLCSLWILPIHC). N-linked (GlcNAc...) asparagine glycosylation is found at Asn52, Asn81, and Asn147.

The protein belongs to the twisted gastrulation protein family. In terms of assembly, binds directly to bmp2, bmp4 and bmp7 and can form a ternary complex with bmps and chordin, thus preventing the binding of bmps to their cell surface receptors.

Its subcellular location is the secreted. In terms of biological role, involved in dorsal-ventral patterning, permitting peak BMP signaling by antagonizing the residual anti-BMP activity of the cleavage products of chrd. Functions to promote the formation of ventral mesoderm by increasing the activity of bmp7 and other BMPS. Seems to antagonize BMP signaling by forming ternary complexes with chrd and BMPs, thereby preventing BMPs from binding to their receptors. In addition to the anti-BMP function, also has pro-BMP activity, partly mediated by cleavage and degradation of chrd, which releases BMPs from ternary complexes. May be an important modulator of BMP-regulated cartilage development and chondrocyte differentiation. The protein is Twisted gastrulation protein homolog 1-B (twsg1-b) of Xenopus laevis (African clawed frog).